The following is a 314-amino-acid chain: MSNSASSFTGVSSGYTAGTPVPADSPIRDNIADAVRRVRETTPLAQSFTNFVTINLVANAQLAAGGTAAMSFLPDDVIETAKIAGANYINVGTLLPFYKDALPEIAQRLNYLDKPWVLDPVAAGIGRTRTAILQAFKAAPPTMIRANASEVIALANMWGLNTETVGDASEHRPAGVESVDDVESATGAAVALAQYLTEQHAKHSSHDASTRCAVAVSGIADLVTDGETVYRLPGGSAMMTKIIGAGCSLGGVAATYLAVSDPLTAALSASLLYNRAGEVADTTSHGPGSFQVAFLDALWNVTAEQVAESEILVQ.

Residue M70 coordinates substrate. Residues R145 and S217 each contribute to the ATP site. Substrate is bound at residue G244.

The protein belongs to the Thz kinase family. Mg(2+) serves as cofactor.

The enzyme catalyses 5-(2-hydroxyethyl)-4-methylthiazole + ATP = 4-methyl-5-(2-phosphooxyethyl)-thiazole + ADP + H(+). Its pathway is cofactor biosynthesis; thiamine diphosphate biosynthesis; 4-methyl-5-(2-phosphoethyl)-thiazole from 5-(2-hydroxyethyl)-4-methylthiazole: step 1/1. Its function is as follows. Catalyzes the phosphorylation of the hydroxyl group of 4-methyl-5-beta-hydroxyethylthiazole (THZ). This Bifidobacterium longum (strain NCC 2705) protein is Hydroxyethylthiazole kinase.